The chain runs to 570 residues: Putative pyruvate decarboxylase C3G9.11c (570 aa).

Aspartate 30 and histidine 119 together coordinate pyruvate. Residues threonine 396 and 419 to 421 (GSI) each bind thiamine diphosphate. Aspartate 451 provides a ligand contact to Mg(2+). Thiamine diphosphate is bound by residues 452–453 (GS) and 478–483 (NKGYTI). Mg(2+) is bound by residues asparagine 478 and glycine 480. Glutamate 484 contacts pyruvate.

Belongs to the TPP enzyme family. Homotetramer. Mg(2+) is required as a cofactor. The cofactor is thiamine diphosphate.

It is found in the cytoplasm. Its subcellular location is the nucleus. The catalysed reaction is a 2-oxocarboxylate + H(+) = an aldehyde + CO2. It catalyses the reaction pyruvate + H(+) = acetaldehyde + CO2. The chain is Putative pyruvate decarboxylase C3G9.11c from Schizosaccharomyces pombe (strain 972 / ATCC 24843) (Fission yeast).